The chain runs to 133 residues: Adenosine 5'-monophosphoramidase hnt1 (133 aa).

In terms of domain architecture, HIT spans 4–107 (IFCKIVKGDI…IPKPNEEYGL (104 aa)). AMP is bound by residues 29-30 (DI), Asn81, 87-89 (HQF), and 94-96 (HFH). The short motif at 92–96 (HVHFH) is the Histidine triad motif element. His94 acts as the Tele-AMP-histidine intermediate in catalysis.

It belongs to the HINT family. Homodimer. The cofactor is Mg(2+).

Its subcellular location is the nucleus. The enzyme catalyses adenosine 5'-phosphoramidate + H2O = AMP + NH4(+). In terms of biological role, hydrolyzes adenosine 5'-monophosphoramidate substrates such as AMP-morpholidate, AMP-N-alanine methyl ester, AMP-alpha-acetyl lysine methyl ester and AMP-NH2. The polypeptide is Adenosine 5'-monophosphoramidase hnt1 (hnt1) (Schizosaccharomyces pombe (strain 972 / ATCC 24843) (Fission yeast)).